A 451-amino-acid polypeptide reads, in one-letter code: UBP1-associated protein 2B (451 aa).

The tract at residues 1–86 (MTKKRKLESE…GNEDDDEEEP (86 aa)) is disordered. Composition is skewed to basic and acidic residues over residues 25 to 38 (CEKE…VDNQ) and 49 to 63 (DTLK…KGED). Residues 67–77 (AETSSGSGNQG) show a composition bias toward polar residues. RRM domains follow at residues 128–236 (RKIF…NVSA) and 227–314 (RKIY…QHQH). 2 disordered regions span residues 302 to 335 (ANDG…GYGA) and 423 to 451 (GGYQ…YMGR). Over residues 431–451 (GQGGAGRGQHGAGYGGPYMGR) the composition is skewed to gly residues.

As to expression, expressed in shoot meristem and flowers.

Its subcellular location is the nucleus. In terms of biological role, heterogeneous nuclear ribonucleoprotein (hnRNP)-like protein that acts as a component of a complex regulating the turnover of mRNAs in the nucleus. Binds with high affinity to RNA molecules that contain U-rich sequences in 3'-UTRs. May function in complex with UBP1 and contribute to the stabilization of mRNAs in the nucleus. This Arabidopsis thaliana (Mouse-ear cress) protein is UBP1-associated protein 2B (UBA2B).